Consider the following 98-residue polypeptide: NADH-ubiquinone oxidoreductase chain 4L (98 aa).

3 helical membrane-spanning segments follow: residues 1 to 21 (MSLTYMNMFMAFTISLLGLLL), 29 to 49 (SLLCLEGMMLSLFVMMTMIIL), and 61 to 81 (IILLVFAACEAALGLSLLVMV).

The protein belongs to the complex I subunit 4L family. In terms of assembly, core subunit of respiratory chain NADH dehydrogenase (Complex I) which is composed of 45 different subunits.

The protein localises to the mitochondrion inner membrane. The enzyme catalyses a ubiquinone + NADH + 5 H(+)(in) = a ubiquinol + NAD(+) + 4 H(+)(out). Functionally, core subunit of the mitochondrial membrane respiratory chain NADH dehydrogenase (Complex I) which catalyzes electron transfer from NADH through the respiratory chain, using ubiquinone as an electron acceptor. Part of the enzyme membrane arm which is embedded in the lipid bilayer and involved in proton translocation. This Platyrrhinus brachycephalus (Short-headed broad-nosed bat) protein is NADH-ubiquinone oxidoreductase chain 4L (MT-ND4L).